A 258-amino-acid chain; its full sequence is Acyl-[acyl-carrier-protein]--UDP-N-acetylglucosamine O-acyltransferase (258 aa).

This sequence belongs to the transferase hexapeptide repeat family. LpxA subfamily. Homotrimer.

It localises to the cytoplasm. The enzyme catalyses a (3R)-hydroxyacyl-[ACP] + UDP-N-acetyl-alpha-D-glucosamine = a UDP-3-O-[(3R)-3-hydroxyacyl]-N-acetyl-alpha-D-glucosamine + holo-[ACP]. Its pathway is glycolipid biosynthesis; lipid IV(A) biosynthesis; lipid IV(A) from (3R)-3-hydroxytetradecanoyl-[acyl-carrier-protein] and UDP-N-acetyl-alpha-D-glucosamine: step 1/6. In terms of biological role, involved in the biosynthesis of lipid A, a phosphorylated glycolipid that anchors the lipopolysaccharide to the outer membrane of the cell. The sequence is that of Acyl-[acyl-carrier-protein]--UDP-N-acetylglucosamine O-acyltransferase from Neisseria meningitidis serogroup B (strain ATCC BAA-335 / MC58).